A 140-amino-acid polypeptide reads, in one-letter code: Nucleoside diphosphate kinase (140 aa).

Residues lysine 11, phenylalanine 59, arginine 87, threonine 93, arginine 104, and asparagine 114 each coordinate ATP. Histidine 117 (pros-phosphohistidine intermediate) is an active-site residue.

Belongs to the NDK family. Homotetramer. Requires Mg(2+) as cofactor.

The protein resides in the cytoplasm. The enzyme catalyses a 2'-deoxyribonucleoside 5'-diphosphate + ATP = a 2'-deoxyribonucleoside 5'-triphosphate + ADP. The catalysed reaction is a ribonucleoside 5'-diphosphate + ATP = a ribonucleoside 5'-triphosphate + ADP. Its function is as follows. Major role in the synthesis of nucleoside triphosphates other than ATP. The ATP gamma phosphate is transferred to the NDP beta phosphate via a ping-pong mechanism, using a phosphorylated active-site intermediate. The sequence is that of Nucleoside diphosphate kinase from Rhodopseudomonas palustris (strain HaA2).